The chain runs to 558 residues: Ubiquitin carboxyl-terminal hydrolase 30 homolog (558 aa).

Residues 6–26 (ILMAAGVTVAAVVGAFVFWGP) traverse the membrane as a helical segment. One can recognise a USP domain in the interval 39-550 (AGLHNFGLTC…PAYLLFYDRG (512 aa)). The active-site Nucleophile is Cys48. The tract at residues 267 to 300 (LATPMLGGERSSRPRLPQSQQQQDEGLNRRVSSS) is disordered. A compositionally biased stretch (low complexity) spans 280-289 (PRLPQSQQQQ). The active-site Proton acceptor is the His506.

It belongs to the peptidase C19 family.

It is found in the mitochondrion outer membrane. It carries out the reaction Thiol-dependent hydrolysis of ester, thioester, amide, peptide and isopeptide bonds formed by the C-terminal Gly of ubiquitin (a 76-residue protein attached to proteins as an intracellular targeting signal).. Its function is as follows. Deubiquitinating enzyme that acts as a key inhibitor of mitophagy by counteracting the action of parkin (park). This Drosophila melanogaster (Fruit fly) protein is Ubiquitin carboxyl-terminal hydrolase 30 homolog.